A 101-amino-acid polypeptide reads, in one-letter code: Small ribosomal subunit protein uS14 (101 aa).

Residues 1–11 (MAKKSAIETNE) show a composition bias toward basic and acidic residues. The disordered stretch occupies residues 1-20 (MAKKSAIETNERRRKLATGH).

The protein belongs to the universal ribosomal protein uS14 family. Part of the 30S ribosomal subunit. Contacts proteins S3 and S10.

Functionally, binds 16S rRNA, required for the assembly of 30S particles and may also be responsible for determining the conformation of the 16S rRNA at the A site. This is Small ribosomal subunit protein uS14 from Xanthobacter autotrophicus (strain ATCC BAA-1158 / Py2).